Here is a 191-residue protein sequence, read N- to C-terminus: Cell division protein SepF (191 aa).

Positions 156–167 (EEASPSNMSNKG) are enriched in polar residues. Positions 156–191 (EEASPSNMSNKGNDLISKETSPAPEPAWGETVATAL) are disordered.

It belongs to the SepF family. As to quaternary structure, homodimer. Interacts with FtsZ.

It is found in the cytoplasm. Functionally, cell division protein that is part of the divisome complex and is recruited early to the Z-ring. Probably stimulates Z-ring formation, perhaps through the cross-linking of FtsZ protofilaments. Its function overlaps with FtsA. The protein is Cell division protein SepF of Prochlorococcus marinus (strain NATL1A).